Here is a 226-residue protein sequence, read N- to C-terminus: uncharacterized protein (226 aa).

The N-terminal stretch at 1–18 is a signal peptide; the sequence is MRRIGLCISLLVTVLVMS.

This is an uncharacterized protein from Bacillus subtilis (strain 168).